A 296-amino-acid polypeptide reads, in one-letter code: HTH-type transcriptional activator AmpR (296 aa).

One can recognise an HTH lysR-type domain in the interval 6 to 63; that stretch reads LPLNALRAFEASARHLSFTRAAIELCVTQAAVSHQVKSLEERLGVALFKRLPRGLMLT. The segment at residues 23–42 is a DNA-binding region (H-T-H motif); that stretch reads FTRAAIELCVTQAAVSHQVK. Positions 83–296 are includes the LysR substrate-binding / effector-binding domain, involved in binding to specific cell-wall-derived muropeptide products, some of which have signaling functions, leading to disparate responses such as antibiotic resistance, virulence, and host cell inflammation; that stretch reads LLERFEGGHY…EMAAVEARGR (214 aa). A LysR substrate-binding domain is found at 91 to 289; that stretch reads HYRDVLTVGA…AFRGWLLEMA (199 aa).

It belongs to the LysR transcriptional regulatory family. In terms of assembly, homodimer.

It localises to the cytoplasm. The protein resides in the membrane. Transcription regulator that plays a critical role in the expression of beta-lactamase AmpC, acting by positive regulation of the ampC gene. Has a wider role in the regulation of expression of genes involved in proteolysis, quorum sensing, and virulence. Acts by binding directly to the promoter region of the ampC gene. Probably does not regulate transcription of its own gene. The sequence is that of HTH-type transcriptional activator AmpR (ampR) from Pseudomonas aeruginosa (strain ATCC 15692 / DSM 22644 / CIP 104116 / JCM 14847 / LMG 12228 / 1C / PRS 101 / PAO1).